Consider the following 179-residue polypeptide: Ubiquitin-conjugating enzyme E2 2 (179 aa).

The tract at residues 1–28 is disordered; that stretch reads MSTPARRRLMRDFKRMQQDPPSGVSASP. One can recognise a UBC core domain in the interval 4 to 150; sequence PARRRLMRDF…VRETVENSWN (147 aa). The Glycyl thioester intermediate role is filled by cysteine 88. The tract at residues 145–179 is disordered; sequence VENSWNDDDDEEEEEEDEDEAEDEDDDDDDNIDED. Over residues 149–179 the composition is skewed to acidic residues; the sequence is WNDDDDEEEEEEDEDEAEDEDDDDDDNIDED. The acidic tail stretch occupies residues 151–179; that stretch reads DDDDEEEEEEDEDEAEDEDDDDDDNIDED.

It belongs to the ubiquitin-conjugating enzyme family.

The protein resides in the cytoplasm. It localises to the nucleus. The catalysed reaction is S-ubiquitinyl-[E1 ubiquitin-activating enzyme]-L-cysteine + [E2 ubiquitin-conjugating enzyme]-L-cysteine = [E1 ubiquitin-activating enzyme]-L-cysteine + S-ubiquitinyl-[E2 ubiquitin-conjugating enzyme]-L-cysteine.. It functions in the pathway protein modification; protein ubiquitination. In terms of biological role, catalyzes the covalent attachment of ubiquitin to other proteins. Plays a role in transcription regulation by catalyzing the monoubiquitination of histone H2B to form H2BK123ub1. H2BK123ub1 gives a specific tag for epigenetic transcriptional activation and is also a prerequisite for H3K4me and H3K79me formation. Also involved in postreplication repair of UV-damaged DNA, in N-end rule-dependent protein degradation and in sporulation. The protein is Ubiquitin-conjugating enzyme E2 2 (UBC2) of Candida albicans (strain SC5314 / ATCC MYA-2876) (Yeast).